An 836-amino-acid polypeptide reads, in one-letter code: Tuftelin-interacting protein 11 (836 aa).

Residues 1-13 (MSLSHLYRDGEGH) show a composition bias toward basic and acidic residues. Disordered stretches follow at residues 1 to 31 (MSLS…DWDL), 54 to 73 (WAER…RARD), and 85 to 136 (LKKG…AGGT). Residues 1 to 50 (MSLSHLYRDGEGHMDDDEDERENFEITDWDLQNEFNPNRQRHWQTKEEAT) are required for interaction with DHX15. Ser-2 carries the post-translational modification Phosphoserine. Acidic residues predominate over residues 14–28 (MDDDEDERENFEITD). Positions 54 to 64 (WAERDSDEERP) are enriched in basic and acidic residues. A phosphoserine mark is found at Ser-59 and Ser-98. The segment covering 91–102 (EEAELEDSDDEE) has biased composition (acidic residues). Positions 103–116 (KPVKQDEFPKDFGP) are enriched in basic and acidic residues. Ser-144 bears the Phosphoserine mark. A G-patch domain is found at 149–195 (TKGIGQKLLQKMGYVPGRGLGKNAQGIINPIEAKQRKGKGAVGAYGS). Positions 183 to 236 (QRKGKGAVGAYGSERTTQSLQDFPVVDSEEEAEEEFQKELSQWRKDPSGSKKKP) are disordered. Residue Ser-210 is modified to Phosphoserine. Positions 217 to 231 (EFQKELSQWRKDPSG) are enriched in basic and acidic residues. Residues 699–704 (VKDKFN) carry the Nuclear localization signal motif. A required for nuclear speckle localization region spans residues 709-733 (IMNRAVSSNVGAYMQPGARENIAYL).

It belongs to the TFP11/STIP family. As to quaternary structure, identified in the spliceosome C complex. Found in the Intron Large (IL) complex, a post-mRNA release spliceosomal complex containing the excised intron, U2, U5 and U6 snRNPs, and splicing factors. Interacts with TUFT1. Interacts with DHX15; indicative for a recruitment of DHX15 to the IL complex. Interacts with GCFC2.

It is found in the cytoplasm. It localises to the nucleus. Functionally, involved in pre-mRNA splicing, specifically in spliceosome disassembly during late-stage splicing events. Intron turnover seems to proceed through reactions in two lariat-intron associated complexes termed Intron Large (IL) and Intron Small (IS). In cooperation with DHX15 seems to mediate the transition of the U2, U5 and U6 snRNP-containing IL complex to the snRNP-free IS complex leading to efficient debranching and turnover of excised introns. May play a role in the differentiation of ameloblasts and odontoblasts or in the forming of the enamel extracellular matrix. The polypeptide is Tuftelin-interacting protein 11 (TFIP11) (Sus scrofa (Pig)).